The following is a 443-amino-acid chain: Glucose-6-phosphate isomerase (443 aa).

The active-site Proton donor is the Glu-285. Catalysis depends on residues His-306 and Lys-420.

Belongs to the GPI family.

It is found in the cytoplasm. It catalyses the reaction alpha-D-glucose 6-phosphate = beta-D-fructose 6-phosphate. Its pathway is carbohydrate biosynthesis; gluconeogenesis. The protein operates within carbohydrate degradation; glycolysis; D-glyceraldehyde 3-phosphate and glycerone phosphate from D-glucose: step 2/4. Catalyzes the reversible isomerization of glucose-6-phosphate to fructose-6-phosphate. The polypeptide is Glucose-6-phosphate isomerase (Staphylococcus aureus (strain NCTC 8325 / PS 47)).